Consider the following 226-residue polypeptide: MHTTQKDTTYTKIFVGGLPYHTTDSSLRKYFEVFGDIEEAVVITDRQTGKSRGYGFVTMADRAAAERACKDPNPIIDGRKANVNLAYLGAKPRIMQPGFAFGVQQIHPALIQRPFGIPAHYVYPHAFVQPGVVIPHVQQAAAASTSPYIDYTSAAYAQYSAAAAAAAAYDQYPYAASPATTGYVTTAGYGYAVPQPLTAAAPGTAAAAAAAFGQYQPQQLQADRMQ.

The region spanning 11–88 is the RRM domain; sequence TKIFVGGLPY…RKANVNLAYL (78 aa).

Its subcellular location is the nucleus. It is found in the cytoplasm. Functionally, multifunctional RNA-binding protein involved in the regulation of pre-mRNA splicing, mRNA stability and mRNA translation important for cell fate decision and differentiation. Plays a major role in pre-mRNA alternative splicing regulation. Mediates preferentially muscle-specific exon inclusion in numerous mRNAs important for striated cardiac and skeletal muscle cell differentiation. Binds to intronic splicing enhancer (ISE) composed of stretches of GU-rich motifs localized in flanking intron of exon that will be included by alternative splicing. Involved in embryonic stem cell (ESC) transition to cardiac cell differentiation by promoting pre-mRNA alternative splicing events of several pluripotency and/or differentiation genes. Plays a role in the regulation of mRNA stability and mRNA translation to which it is bound. Involved in myogenic differentiation by regulating myog levels. Binds to a huge amount of mRNAs. Required for embryonic heart development, sarcomer and M-band formation in striated muscles. The polypeptide is RNA-binding protein 24 (rbm24) (Xenopus tropicalis (Western clawed frog)).